A 159-amino-acid polypeptide reads, in one-letter code: Nucleoside diphosphate kinase (159 aa).

Residues K13, F61, R89, T95, R106, and N116 each coordinate ATP. The active-site Pros-phosphohistidine intermediate is the H119.

It belongs to the NDK family. The cofactor is Mg(2+).

It is found in the cytoplasm. It catalyses the reaction a 2'-deoxyribonucleoside 5'-diphosphate + ATP = a 2'-deoxyribonucleoside 5'-triphosphate + ADP. The catalysed reaction is a ribonucleoside 5'-diphosphate + ATP = a ribonucleoside 5'-triphosphate + ADP. In terms of biological role, major role in the synthesis of nucleoside triphosphates other than ATP. The ATP gamma phosphate is transferred to the NDP beta phosphate via a ping-pong mechanism, using a phosphorylated active-site intermediate. The sequence is that of Nucleoside diphosphate kinase from Halorubrum lacusprofundi (strain ATCC 49239 / DSM 5036 / JCM 8891 / ACAM 34).